Here is a 328-residue protein sequence, read N- to C-terminus: Malate dehydrogenase (328 aa).

Position 12 to 18 (12 to 18 (GAAGQIG)) interacts with NAD(+). 2 residues coordinate substrate: R95 and R101. NAD(+) is bound by residues N108, Q115, and 132–134 (VGN). The substrate site is built by N134 and R165. The active-site Proton acceptor is H190.

It belongs to the LDH/MDH superfamily. MDH type 2 family.

The enzyme catalyses (S)-malate + NAD(+) = oxaloacetate + NADH + H(+). Catalyzes the reversible oxidation of malate to oxaloacetate. This is Malate dehydrogenase from Polaromonas sp. (strain JS666 / ATCC BAA-500).